We begin with the raw amino-acid sequence, 328 residues long: Oligopeptide transport ATP-binding protein AppD (328 aa).

In terms of domain architecture, ABC transporter spans 5 to 256 (LEVNNLKTYF…PLHPYTEGLL (252 aa)). An ATP-binding site is contributed by 41 to 48 (GESGSGKS).

It belongs to the ABC transporter superfamily.

It is found in the cell membrane. This protein is a component of an oligopeptide permease, a binding protein-dependent transport system. This APP system can completely substitute for the OPP system in both sporulation and genetic competence, though, unlike OPP, is incapable of transporting tripeptides. Probably responsible for energy coupling to the transport system. This chain is Oligopeptide transport ATP-binding protein AppD (appD), found in Bacillus subtilis (strain 168).